Consider the following 206-residue polypeptide: Ion-translocating oxidoreductase complex subunit G (206 aa).

A helical transmembrane segment spans residues G9–M29. Position 174 is an FMN phosphoryl threonine (T174).

Belongs to the RnfG family. The complex is composed of six subunits: RsxA, RsxB, RsxC, RsxD, RsxE and RsxG. FMN serves as cofactor.

The protein localises to the cell inner membrane. In terms of biological role, part of a membrane-bound complex that couples electron transfer with translocation of ions across the membrane. Required to maintain the reduced state of SoxR. Probably transfers electron from NAD(P)H to SoxR. The chain is Ion-translocating oxidoreductase complex subunit G from Escherichia coli (strain K12).